Consider the following 101-residue polypeptide: Small ribosomal subunit protein uS14 (101 aa).

The protein belongs to the universal ribosomal protein uS14 family. In terms of assembly, part of the 30S ribosomal subunit. Contacts proteins S3 and S10.

Its function is as follows. Binds 16S rRNA, required for the assembly of 30S particles and may also be responsible for determining the conformation of the 16S rRNA at the A site. The sequence is that of Small ribosomal subunit protein uS14 from Corynebacterium efficiens (strain DSM 44549 / YS-314 / AJ 12310 / JCM 11189 / NBRC 100395).